The sequence spans 41 residues: Conotoxin Bu22 (41 aa).

The propeptide occupies 1–25 (SDRASDGRNAAANDRASDLVALTVR). 2 cysteine pairs are disulfide-bonded: Cys27/Cys33 and Cys28/Cys40.

Belongs to the conotoxin A superfamily. In terms of tissue distribution, expressed by the venom duct.

The protein resides in the secreted. The chain is Conotoxin Bu22 from Conus bullatus (Bubble cone).